The primary structure comprises 179 residues: Large ribosomal subunit protein uL5 (179 aa).

This sequence belongs to the universal ribosomal protein uL5 family. Part of the 50S ribosomal subunit; part of the 5S rRNA/L5/L18/L25 subcomplex. Contacts the 5S rRNA and the P site tRNA. Forms a bridge to the 30S subunit in the 70S ribosome.

In terms of biological role, this is one of the proteins that bind and probably mediate the attachment of the 5S RNA into the large ribosomal subunit, where it forms part of the central protuberance. In the 70S ribosome it contacts protein S13 of the 30S subunit (bridge B1b), connecting the 2 subunits; this bridge is implicated in subunit movement. Contacts the P site tRNA; the 5S rRNA and some of its associated proteins might help stabilize positioning of ribosome-bound tRNAs. The sequence is that of Large ribosomal subunit protein uL5 from Dictyoglomus turgidum (strain DSM 6724 / Z-1310).